A 2179-amino-acid polypeptide reads, in one-letter code: MTSPSDYQSNSSLATTYSNAPKLSKALSNKYDYLYEVDILKENQKISDTYLPLLNPYSAFAKRSVTPWSQIRSLVQSKPRHVKEYVAASKLDQHPVFATGEEQFVTLHIPEEFASHWKSHQFTHIHFGAVKIALTYHGRKGQPVVARLALLDTRYLEYQHANLGTAEITLNAGTVFITLFPNFTMSLSDANLSTALKIQVQIQGAPLTKDSIQATLHYQIAWRVQNHAMDLTLPGGEEALFLKIDAGSGATQCTQVPRQLSKEDLIKILPDSWVTNYEKLREPEEPLRSTEVSMSKRHDKSVAISFDHSHYKKLRNTHHFMGMISDDVIVLDDPETFSKTLPSLMQTHDWIHHFQLDGRAVSWYKDPFDGHCPWDIDCQCYSCLYSEDEEDFEDGFPTKYKGIPRPGSIAERKMQEEANLKKLYEEKDPFVGSLSRPGKYEYLVRYDAPSWAKDPHLTVEPTGWDSDEPIPPKQPFTTRNTLPKIYMFNPLNYENNFPPLSSFSKDGADHTPKIPKRNVVLPSGAKDPTGDLEATVNWQTENALAQNRMLTTIDRTLKETVTKVDRVTDQSSKNQGLIKVLEQQLQDLNKRICPPGTSLFHFFDQQKSEMASLKEQIRLLKEQPQKNETDTPSYQSSYQPFHSFSSPYMPSNPPNSPFTTFANTPQPQPSLFSQYPIQPKSPNTFDLAKLVWEKKDAIAAEKRAKKKLQKDEVKQKTSLPPESKRPDPQSSSHLGDQFMISDPALPKVYALNEPSVPSEDTSSQSYISTEESVEDTDSFSVVSEESTQLSQLSSSSNDSPENNENTLPQTFMVRPTEPEISEVEDEVDGMTEEPIPERRPEITPPKMVGTGFHTFSLDDISITKWPERIQDFHTWMLTKQLVEREPFLILSEFTARLSGTLREWWNSVGPDDKNRFLTSQDFTWNIRILYSYFCGDQSQNKEELRRQIFEMKCLSYDRKKIDRHFQRMIKLFYHIGGDISLKQAFISSLPPILSERISALIKERGTSVTQMHVGDIRQTAFYVLDDLCSKRKFFNQMKKMSRDLEKACTKSDLIIKGDKGCSGYCNPSRRRKYKRFKLPSFKERDGRQYRKRRRFFRRSKTSKAMRQKPRSCFTCGKIGHFSRNCPQNKKSIKLISEIQKYTGIDIEDDLESVFSIEDEPSEDTLFSLEFYEEYAGEQYQITSYEAPKTENPPLPKIHTIVEIPQTEVKIYTSKWDKPISVIAFYDTGAAYSIMDPAILPSEYWIPHFRHFGTADDGILTTTVKTKHPITIEFFPGFKYTTKLLGSDIPGKDLLIGFDIYRQLNNKLRIGADGIRWKNQFKRYTEIPRLFQLTTSNELQQLEDVIKNQLCADSHVDFLSKCSHPLWLNQDFFIQLPFKKNENINPTKASHSGMNPEHLQLAIKECDELQQFDLIEPSDSQWACEAFYVNKRSEQVRGKLRLVINYQPLNHFLQDDKFPIPNKLTLFSHLSKAKLFSKFDLKSGFWQLGIHPNERPKTGFCIPDRHFQWKVMPFGLKTAPSLFQKAMIKIFQPILFSALVYIDDILLFSETLEDHIKLLNQFISLVKKFGVMLSAKKMILAQNKIQFLGMDFADGTFSPAGHISLELQKFPDTNLSVKQIQQFLGIVNYIRDFIPEVTEHISPLSDMLKKKPPAWGKCQDNAVKQLKQLAQQVKSLHIPSEGKKILQTDASDQYWSAVLLEEHNGKRKICGFASGKFKVSEQHYHSTFKEILAVKNGIKKFNFFLIHTNFLVEMDMRAFPKMIRLNPKIVPNSQLLRWAQWFSPYQFEVKHLKGKDNILADFLSRPHEFSQRLKNSPKVLMFQRRTRSSSTKSKADSSQSTGSSYKLSHNLPENPPEVFNLDYPWDTSVFLERRTFYELQVFKKYGGSILRPFGVDPEYPFAHIFIPNPTDFSEDLLWMFWYLLNHFHILMKFRCSKFSKIDQVNPWMLKFLLWFNNHNYWASLFKCMKGIKKYVVIWFYRPVNYYQGKLCALPHSSIVKWNHVSVLNDEDEYSELQRFIFQENKCIPKEIWPGSSGSWNYGNSDHPHGQWIRDALREYREMNDYFQDAQDPYPAYSKVDLTQEELNTLRITRSYGSSSEDADMVKRSIYTVQSNIVKDSPRKRKGKAKSRSSTRSEKRRAKNKCKYRSLHGEDWWIELGYSTKPSTPSWTQDSSSEPCV.

4 disordered regions span residues 503–531 (FSKD…PTGD), 623–678 (QPQK…YPIQ), 703–738 (RAKK…GDQF), and 753–847 (EPSV…PPKM). Polar residues-rich tracts occupy residues 630-642 (DTPS…QPFH) and 659-678 (TTFA…YPIQ). A compositionally biased stretch (polar residues) spans 758 to 770 (SEDTSSQSYISTE). The segment covering 783-806 (SEESTQLSQLSSSSNDSPENNENT) has biased composition (low complexity). Residues 819-831 (EISEVEDEVDGMT) are compositionally biased toward acidic residues. The CCHC-type zinc-finger motif lies at 1112-1125 (CFTCGKIGHFSRNC). D1226 serves as the catalytic For protease activity; shared with dimeric partner. One can recognise a Reverse transcriptase domain in the interval 1409-1591 (QQFDLIEPSD…NKIQFLGMDF (183 aa)). Positions 1479, 1542, and 1543 each coordinate Mg(2+). 3 disordered regions span residues 1822-1848 (QRRT…KLSH), 2114-2144 (NIVK…KNKC), and 2160-2179 (YSTK…EPCV). The span at 1827-1840 (SSSTKSKADSSQST) shows a compositional bias: low complexity. Residues 2120–2144 (PRKRKGKAKSRSSTRSEKRRAKNKC) are compositionally biased toward basic residues. The segment covering 2162 to 2179 (TKPSTPSWTQDSSSEPCV) has biased composition (polar residues).

This sequence belongs to the Petuviruses genome polyprotein family.

It catalyses the reaction DNA(n) + a 2'-deoxyribonucleoside 5'-triphosphate = DNA(n+1) + diphosphate. Its function is as follows. Encodes presumably for at least four polypeptides: Movement protein (MP), capsid protein (CP), Protease (PR), and reverse transcriptase (RT). The protein is Genome polyprotein of Petunia vein clearing virus (isolate Shepherd) (PVCV).